A 313-amino-acid chain; its full sequence is Adhesin MafA 2 (313 aa).

The N-terminal stretch at 1–14 (MKTLLLLIPLVLTA) is a signal peptide. Residue C15 is the site of N-palmitoyl cysteine attachment. C15 is lipidated: S-diacylglycerol cysteine. Residues 282–297 (GDTTAQNRPDFKQNNG) show a composition bias toward polar residues. A disordered region spans residues 282 to 313 (GDTTAQNRPDFKQNNGKKPDVGNEVIRRRKGG).

It belongs to the MafA family.

The protein resides in the cell outer membrane. This Neisseria meningitidis serogroup A / serotype 4A (strain DSM 15465 / Z2491) protein is Adhesin MafA 2 (mafA2).